The sequence spans 591 residues: Glucose-6-phosphate isomerase (591 aa).

Glutamate 380 (proton donor) is an active-site residue. Active-site residues include histidine 411 and lysine 540.

The protein belongs to the GPI family. As to quaternary structure, homodimer.

Its subcellular location is the cytoplasm. It catalyses the reaction alpha-D-glucose 6-phosphate = beta-D-fructose 6-phosphate. The protein operates within carbohydrate degradation; glycolysis; D-glyceraldehyde 3-phosphate and glycerone phosphate from D-glucose: step 2/4. The sequence is that of Glucose-6-phosphate isomerase (GGI.R1) from Plasmodium falciparum.